A 560-amino-acid polypeptide reads, in one-letter code: Dihydroxy-acid dehydratase (560 aa).

The segment at 1–20 (MGDNLKKRSSMTTDGDNRAP) is disordered. Residue Cys-52 coordinates [2Fe-2S] cluster. Asp-84 is a binding site for Mg(2+). Cys-125 is a [2Fe-2S] cluster binding site. Mg(2+) contacts are provided by Asp-126 and Lys-127. The residue at position 127 (Lys-127) is an N6-carboxylysine. Cys-197 contributes to the [2Fe-2S] cluster binding site. Glu-448 serves as a coordination point for Mg(2+). Ser-474 acts as the Proton acceptor in catalysis.

This sequence belongs to the IlvD/Edd family. In terms of assembly, homodimer. Requires [2Fe-2S] cluster as cofactor. Mg(2+) serves as cofactor.

The enzyme catalyses (2R)-2,3-dihydroxy-3-methylbutanoate = 3-methyl-2-oxobutanoate + H2O. It carries out the reaction (2R,3R)-2,3-dihydroxy-3-methylpentanoate = (S)-3-methyl-2-oxopentanoate + H2O. The protein operates within amino-acid biosynthesis; L-isoleucine biosynthesis; L-isoleucine from 2-oxobutanoate: step 3/4. It participates in amino-acid biosynthesis; L-valine biosynthesis; L-valine from pyruvate: step 3/4. In terms of biological role, functions in the biosynthesis of branched-chain amino acids. Catalyzes the dehydration of (2R,3R)-2,3-dihydroxy-3-methylpentanoate (2,3-dihydroxy-3-methylvalerate) into 2-oxo-3-methylpentanoate (2-oxo-3-methylvalerate) and of (2R)-2,3-dihydroxy-3-methylbutanoate (2,3-dihydroxyisovalerate) into 2-oxo-3-methylbutanoate (2-oxoisovalerate), the penultimate precursor to L-isoleucine and L-valine, respectively. The protein is Dihydroxy-acid dehydratase of Leptospira interrogans serogroup Icterohaemorrhagiae serovar copenhageni (strain Fiocruz L1-130).